Here is a 346-residue protein sequence, read N- to C-terminus: Signal recognition particle receptor FtsY (346 aa).

GTP-binding positions include 143–150, 225–229, and 289–292; these read GVNGVGKT, DTSGR, and TKMD.

It belongs to the GTP-binding SRP family. FtsY subfamily. Part of the signal recognition particle protein translocation system, which is composed of SRP and FtsY.

The protein localises to the cell membrane. Its subcellular location is the cytoplasm. It carries out the reaction GTP + H2O = GDP + phosphate + H(+). In terms of biological role, involved in targeting and insertion of nascent membrane proteins into the cytoplasmic membrane. Acts as a receptor for the complex formed by the signal recognition particle (SRP) and the ribosome-nascent chain (RNC). The sequence is that of Signal recognition particle receptor FtsY from Mycoplasma genitalium (strain ATCC 33530 / DSM 19775 / NCTC 10195 / G37) (Mycoplasmoides genitalium).